The primary structure comprises 531 residues: Putative cysteine ligase BshC (531 aa).

Residues 447–481 (KAQEKKQTKGLDNLEKRLLKAEKKMHSEKLKKIIE) adopt a coiled-coil conformation.

The protein belongs to the BshC family.

The chain is Putative cysteine ligase BshC from Flavobacterium psychrophilum (strain ATCC 49511 / DSM 21280 / CIP 103535 / JIP02/86).